An 86-amino-acid chain; its full sequence is YcgL domain-containing protein Smlt4554 (86 aa).

A YcgL domain is found at 1 to 85 (MHAYVYKSQL…SVASLMPRHY (85 aa)).

This is YcgL domain-containing protein Smlt4554 from Stenotrophomonas maltophilia (strain K279a).